The chain runs to 109 residues: Putative pterin-4-alpha-carbinolamine dehydratase (109 aa).

The protein belongs to the pterin-4-alpha-carbinolamine dehydratase family.

The catalysed reaction is (4aS,6R)-4a-hydroxy-L-erythro-5,6,7,8-tetrahydrobiopterin = (6R)-L-erythro-6,7-dihydrobiopterin + H2O. In Vibrio cholerae serotype O1 (strain ATCC 39315 / El Tor Inaba N16961), this protein is Putative pterin-4-alpha-carbinolamine dehydratase.